Reading from the N-terminus, the 21-residue chain is Complement receptor 3-related protein (21 aa).

The protein resides in the secreted. Its function is as follows. Plays a role in adherence of C.albicans to buccal epithelial cells, and in biofilm formation. The protein is Complement receptor 3-related protein of Candida albicans (Yeast).